The sequence spans 445 residues: Lipoyl synthase, mitochondrial (445 aa).

The transit peptide at 1-40 (MRPGSWRVITHYGFTGPIQRLQAPLRRSLARAAALSTRSY) directs the protein to the mitochondrion. Positions 42 to 71 (TIPSAPSSQPTSQESSPAASASASASAPAT) are enriched in low complexity. A disordered region spans residues 42–77 (TIPSAPSSQPTSQESSPAASASASASAPATKPRPTY). [4Fe-4S] cluster-binding residues include Cys-157, Cys-162, Cys-168, Cys-188, Cys-192, Cys-195, and Ser-405. In terms of domain architecture, Radical SAM core spans 171 to 394 (GSNKAAATAT…RQRALDMGFL (224 aa)).

The protein belongs to the radical SAM superfamily. Lipoyl synthase family. The cofactor is [4Fe-4S] cluster.

It localises to the mitochondrion. The catalysed reaction is [[Fe-S] cluster scaffold protein carrying a second [4Fe-4S](2+) cluster] + N(6)-octanoyl-L-lysyl-[protein] + 2 oxidized [2Fe-2S]-[ferredoxin] + 2 S-adenosyl-L-methionine + 4 H(+) = [[Fe-S] cluster scaffold protein] + N(6)-[(R)-dihydrolipoyl]-L-lysyl-[protein] + 4 Fe(3+) + 2 hydrogen sulfide + 2 5'-deoxyadenosine + 2 L-methionine + 2 reduced [2Fe-2S]-[ferredoxin]. It participates in protein modification; protein lipoylation via endogenous pathway; protein N(6)-(lipoyl)lysine from octanoyl-[acyl-carrier-protein]: step 2/2. Its function is as follows. Catalyzes the radical-mediated insertion of two sulfur atoms into the C-6 and C-8 positions of the octanoyl moiety bound to the lipoyl domains of lipoate-dependent enzymes, thereby converting the octanoylated domains into lipoylated derivatives. The polypeptide is Lipoyl synthase, mitochondrial (Sordaria macrospora (strain ATCC MYA-333 / DSM 997 / K(L3346) / K-hell)).